We begin with the raw amino-acid sequence, 579 residues long: Putative fatty-acid--CoA ligase fadD21 (579 aa).

Belongs to the ATP-dependent AMP-binding enzyme family.

In Mycobacterium leprae (strain TN), this protein is Putative fatty-acid--CoA ligase fadD21 (fadD21).